The sequence spans 649 residues: Mitochondrial Rho GTPase 1 (649 aa).

The Cytoplasmic segment spans residues 1–623 (MTKETIRVVI…KPTNIDYSSA (623 aa)). In terms of domain architecture, Miro 1 spans 3–176 (KETIRVVICG…FYLCQRSISY (174 aa)). GTP-binding positions include 12–19 (GDDGVGKT), 61–63 (DTD), and 115–118 (NKCD). EF-hand domains lie at 192-227 (SAVA…CFGK) and 320-355 (KGYR…TPGL). Aspartate 205, aspartate 207, aspartate 209, glutamate 216, aspartate 333, aspartate 335, aspartate 337, and glutamate 344 together coordinate Ca(2+). Positions 436–601 (RKVFNCFVVG…FKKIIQASLE (166 aa)) constitute a Miro 2 domain. Residues 445–452 (GKRNSGKS), 481–485 (EVTGD), and 550–553 (LKAD) each bind GTP. The chain crosses the membrane as a helical; Anchor for type IV membrane protein span at residues 624-644 (VILGSSIGFLALFSYTMIKLL). Over 645–649 (KPTQQ) the chain is Mitochondrial intermembrane.

It belongs to the mitochondrial Rho GTPase family.

Its subcellular location is the mitochondrion outer membrane. Functionally, mitochondrial GTPase involved in mitochondrial trafficking. Probably involved in control of anterograde transport of mitochondria and their subcellular distribution. This is Mitochondrial Rho GTPase 1 (GEM1) from Candida glabrata (strain ATCC 2001 / BCRC 20586 / JCM 3761 / NBRC 0622 / NRRL Y-65 / CBS 138) (Yeast).